A 340-amino-acid polypeptide reads, in one-letter code: Ketol-acid reductoisomerase (NADP(+)) (340 aa).

Residues 2 to 182 (ANIYYENHAD…GCTRAGVIET (181 aa)) enclose the KARI N-terminal Rossmann domain. NADP(+) is bound by residues 25–28 (FGSQ), serine 51, serine 53, and 83–86 (DTAQ). The active site involves histidine 108. An NADP(+)-binding site is contributed by glycine 134. The 146-residue stretch at 183–328 (TFAEETETDL…RELRRMMPFV (146 aa)) folds into the KARI C-terminal knotted domain. Positions 191, 195, 227, and 231 each coordinate Mg(2+). Residue serine 252 coordinates substrate.

The protein belongs to the ketol-acid reductoisomerase family. Mg(2+) serves as cofactor.

It catalyses the reaction (2R)-2,3-dihydroxy-3-methylbutanoate + NADP(+) = (2S)-2-acetolactate + NADPH + H(+). The catalysed reaction is (2R,3R)-2,3-dihydroxy-3-methylpentanoate + NADP(+) = (S)-2-ethyl-2-hydroxy-3-oxobutanoate + NADPH + H(+). It participates in amino-acid biosynthesis; L-isoleucine biosynthesis; L-isoleucine from 2-oxobutanoate: step 2/4. It functions in the pathway amino-acid biosynthesis; L-valine biosynthesis; L-valine from pyruvate: step 2/4. Its function is as follows. Involved in the biosynthesis of branched-chain amino acids (BCAA). Catalyzes an alkyl-migration followed by a ketol-acid reduction of (S)-2-acetolactate (S2AL) to yield (R)-2,3-dihydroxy-isovalerate. In the isomerase reaction, S2AL is rearranged via a Mg-dependent methyl migration to produce 3-hydroxy-3-methyl-2-ketobutyrate (HMKB). In the reductase reaction, this 2-ketoacid undergoes a metal-dependent reduction by NADPH to yield (R)-2,3-dihydroxy-isovalerate. The protein is Ketol-acid reductoisomerase (NADP(+)) of Roseiflexus castenholzii (strain DSM 13941 / HLO8).